The chain runs to 225 residues: UPF0758 protein XAC3915 (225 aa).

Residues 102–224 enclose the MPN domain; it reads ALSDPPSVGR…PVSFAERGWL (123 aa). The Zn(2+) site is built by H173, H175, and D186. Residues 173–186 carry the JAMM motif motif; sequence HNHPSGNPEPSEAD.

It belongs to the UPF0758 family.

The polypeptide is UPF0758 protein XAC3915 (Xanthomonas axonopodis pv. citri (strain 306)).